Here is a 158-residue protein sequence, read N- to C-terminus: C-type lectin (158 aa).

Residues 1–23 (MGHFTFISLCLMPIFLSLSGAEC) form the signal peptide. Disulfide bonds link Cys26/Cys37, Cys54/Cys154, Cys61/Cys156, and Cys129/Cys146. In terms of domain architecture, C-type lectin spans 33–155 (RNGLCYKLFD…CESLFAFICR (123 aa)). N-linked (GlcNAc...) asparagine glycans are attached at residues Asn111 and Asn121. A Mannose-binding motif is present at residues 119 to 121 (EPN). Glu127, Asn142, and Asp143 together coordinate Ca(2+).

Belongs to the true venom lectin family. As to quaternary structure, homodimer; non-covalently linked. In terms of tissue distribution, expressed by the venom gland.

Its subcellular location is the secreted. Functionally, mannose-binding lectin which recognizes specific carbohydrate structures and agglutinates a variety of animal cells by binding to cell-surface glycoproteins and glycolipids. May be a calcium-dependent lectin. The polypeptide is C-type lectin (Micrurus corallinus (Brazilian coral snake)).